Consider the following 110-residue polypeptide: MRSKVEILPSNLIFHELIGLEIKVINSTNPSLTGIRGRVINETKNMLVVENSQSRELKIPKADSEFLFRIPAELSEKGRRSDTFVKIQGNLLLSQPENRIKNIKKLRKWG.

It belongs to the eukaryotic/archaeal RNase P protein component 1 family. As to quaternary structure, consists of a catalytic RNA component and at least 4-5 protein subunits.

The protein localises to the cytoplasm. The catalysed reaction is Endonucleolytic cleavage of RNA, removing 5'-extranucleotides from tRNA precursor.. Part of ribonuclease P, a protein complex that generates mature tRNA molecules by cleaving their 5'-ends. This chain is Ribonuclease P protein component 1, found in Methanosarcina acetivorans (strain ATCC 35395 / DSM 2834 / JCM 12185 / C2A).